A 217-amino-acid polypeptide reads, in one-letter code: ATP-dependent Clp protease proteolytic subunit (217 aa).

Residue Ser-121 is the Nucleophile of the active site. Residue His-146 is part of the active site.

Belongs to the peptidase S14 family. As to quaternary structure, fourteen ClpP subunits assemble into 2 heptameric rings which stack back to back to give a disk-like structure with a central cavity, resembling the structure of eukaryotic proteasomes.

It localises to the cytoplasm. It catalyses the reaction Hydrolysis of proteins to small peptides in the presence of ATP and magnesium. alpha-casein is the usual test substrate. In the absence of ATP, only oligopeptides shorter than five residues are hydrolyzed (such as succinyl-Leu-Tyr-|-NHMec, and Leu-Tyr-Leu-|-Tyr-Trp, in which cleavage of the -Tyr-|-Leu- and -Tyr-|-Trp bonds also occurs).. In terms of biological role, cleaves peptides in various proteins in a process that requires ATP hydrolysis. Has a chymotrypsin-like activity. Plays a major role in the degradation of misfolded proteins. The polypeptide is ATP-dependent Clp protease proteolytic subunit (Burkholderia cenocepacia (strain HI2424)).